A 139-amino-acid chain; its full sequence is CLAVATA3/ESR (CLE)-related protein 1 (139 aa).

An N-terminal signal peptide occupies residues 1-22 (MPNIFKILLIVLLAVVSFRLSA). A required for secretion from the host cytoplasm to the host apoplasm region spans residues 23 to 90 (STGDKKTAND…VPSHLTNRSM (68 aa)). N-linked (GlcNAc...) asparagine glycans are attached at residues N37 and N87. The disordered stretch occupies residues 66–139 (AIGRSNAQGG…SPSGPDPHHH (74 aa)). The stretch at 100-125 (EKGAATRVEKMRAQLRELAEKMTDKD) forms a coiled coil. Basic and acidic residues predominate over residues 106 to 128 (RVEKMRAQLRELAEKMTDKDPKR). The CLE signature appears at 128–139 (RLSPSGPDPHHH).

It belongs to the CLV3/ESR signal peptide family. As to expression, highly expressed exclusively within the dorsal esophageal gland cell during syncytium formation in host plants (at protein level).

The protein localises to the secreted. Its subcellular location is the host cytoplasm. It is found in the host extracellular space. The protein resides in the extracellular space. It localises to the apoplast. In terms of biological role, mimics host plant CLE extracellular signal peptides that regulate cell fate. May play a role in the differentiation or division of feeding cells (syncytia) induced in plant roots during infection. The protein is CLAVATA3/ESR (CLE)-related protein 1 (CLE1) of Heterodera glycines (Soybean cyst nematode worm).